The sequence spans 122 residues: Ribosome-binding factor A (122 aa).

Belongs to the RbfA family. As to quaternary structure, monomer. Binds 30S ribosomal subunits, but not 50S ribosomal subunits or 70S ribosomes.

Its subcellular location is the cytoplasm. In terms of biological role, one of several proteins that assist in the late maturation steps of the functional core of the 30S ribosomal subunit. Associates with free 30S ribosomal subunits (but not with 30S subunits that are part of 70S ribosomes or polysomes). Required for efficient processing of 16S rRNA. May interact with the 5'-terminal helix region of 16S rRNA. This Streptococcus agalactiae serotype III (strain NEM316) protein is Ribosome-binding factor A.